The following is a 360-amino-acid chain: Aminomethyltransferase (360 aa).

Belongs to the GcvT family. The glycine cleavage system is composed of four proteins: P, T, L and H.

The enzyme catalyses N(6)-[(R)-S(8)-aminomethyldihydrolipoyl]-L-lysyl-[protein] + (6S)-5,6,7,8-tetrahydrofolate = N(6)-[(R)-dihydrolipoyl]-L-lysyl-[protein] + (6R)-5,10-methylene-5,6,7,8-tetrahydrofolate + NH4(+). Its function is as follows. The glycine cleavage system catalyzes the degradation of glycine. This chain is Aminomethyltransferase, found in Methylococcus capsulatus (strain ATCC 33009 / NCIMB 11132 / Bath).